The following is a 545-amino-acid chain: Chaperonin GroEL 2 (545 aa).

ATP is bound by residues 29-32 (TLGP), 86-90 (DGTTT), Gly-413, 479-481 (NAA), and Asp-495.

Belongs to the chaperonin (HSP60) family. In terms of assembly, forms a cylinder of 14 subunits composed of two heptameric rings stacked back-to-back. Interacts with the co-chaperonin GroES.

It is found in the cytoplasm. The enzyme catalyses ATP + H2O + a folded polypeptide = ADP + phosphate + an unfolded polypeptide.. Functionally, together with its co-chaperonin GroES, plays an essential role in assisting protein folding. The GroEL-GroES system forms a nano-cage that allows encapsulation of the non-native substrate proteins and provides a physical environment optimized to promote and accelerate protein folding. This Prochlorococcus marinus (strain MIT 9215) protein is Chaperonin GroEL 2.